Consider the following 1067-residue polypeptide: MKGMRLMPMKMKAKLVVLSVGALWMMMFFLVDYAEGRRLSQLPESECDFDFKEQPEDFFGILDSSLVPPKEPKDDIYQLKTTRQHSGRRRKQSHKSQNKAALRLPPPFLWTDDAVDVLQHSHSPTLNGQPIQRRRRAVTVRKERTWDYGVIPYEIDTIFSGAHKALFKQAMRHWENFTCIKFVERDPNLHANYIYFTVKNCGCCSFLGKNGNGRQPISIGRNCEKFGIIIHELGHTIGFHHEHARGDRDKHIVINKGNIMRGQEYNFDVLSPEEVDLPLLPYDLNSIMHYAKNSFSKSPYLDTITPIGIPPGTHLELGQRKRLSRGDIVQANLLYKCASCGRTYQQNSGHIVSPHFIYSGNGVLSEFEGSGDAGEDPSAESEFDASLTNCEWRITATNGEKVILHLQQLHLMSSDDCTQDYLEIRDGYWHKSPLVRRICGNVSGEVITTQTSRMLLNYVNRNAAKGYRGFKARFEVVCGGDLKLTKDQSIDSPNYPMDYMPDKECVWRITAPDNHQVALKFQSFELEKHDGCAYDFVEIRDGNHSDSRLIGRFCGDKLPPNIKTRSNQMYIRFVSDSSVQKLGFSAALMLDVDECKFTDHGCQHLCINTLGSYQCGCRAGYELQANGKTCEDACGGVVDATKSNGSLYSPSYPDVYPNSKQCVWEVVAPPNHAVFLNFSHFDLEGTRFHYTKCNYDYLIIYSKMRDNRLKKIGIYCGHELPPVVNSEQSILRLEFYSDRTVQRSGFVAKFVIDVDECSMNNGGCQHRCRNTFGSYQCSCRNGYTLAENGHNCTETRCKFEITTSYGVLQSPNYPEDYPRNIYCYWHFQTVLGHRIQLTFHDFEVESHQECIYDYVAIYDGRSENSSTLGIYCGGREPYAVIASTNEMFMVLATDAGLQRKGFKATFVSECGGYLRATNHSQTFYSHPRYGSRPYKRNMYCDWRIQADPESSVKIRFLHFEIEYSERCDYDYLEITEEGYSMNTIHGRFCGKHKPPIIISNSDTLLLRFQTDESNSLRGFAISFMAVDPPEDSVGEDFDAVTPFPGYLKSMYSSETGSDHLLPPSRLI.

An N-terminal signal peptide occupies residues 1-36; it reads MKGMRLMPMKMKAKLVVLSVGALWMMMFFLVDYAEG. The propeptide occupies 37-136; sequence RRLSQLPESE…NGQPIQRRRR (100 aa). Residues 136–338 form the Peptidase M12A domain; sequence RAVTVRKERT…VQANLLYKCA (203 aa). N-linked (GlcNAc...) asparagine glycosylation occurs at N176. 5 disulfide bridges follow: C179–C337, C201–C223, C203–C204, C340–C390, and C417–C439. H231 is a binding site for Zn(2+). Residue E232 is part of the active site. H235 and H241 together coordinate Zn(2+). Short sequence motifs (cell attachment site) lie at residues 245-247 and 325-327; these read RGD. 2 CUB domains span residues 340–477 and 478–591; these read CGRT…FEVV and CGGD…LMLD. Residue N441 is glycosylated (N-linked (GlcNAc...) asparagine). Cystine bridges form between C478–C505, C532–C554, C595–C606, C602–C615, C617–C630, and C634–C662. N543 carries an N-linked (GlcNAc...) asparagine glycan. The EGF-like 1; calcium-binding domain occupies 591–631; the sequence is DVDECKFTDHGCQHLCINTLGSYQCGCRAGYELQANGKTCE. Positions 634–753 constitute a CUB 3 domain; that stretch reads CGGVVDATKS…SGFVAKFVID (120 aa). N-linked (GlcNAc...) asparagine glycosylation is found at N644 and N677. 8 disulfide bridges follow: C693/C716, C757/C768, C764/C777, C779/C792, C797/C823, C850/C872, C910/C940, and C967/C989. The EGF-like 2; calcium-binding domain occupies 753 to 793; the sequence is DVDECSMNNGGCQHRCRNTFGSYQCSCRNGYTLAENGHNCT. The N-linked (GlcNAc...) asparagine glycan is linked to N791. CUB domains are found at residues 797 to 909 and 910 to 1026; these read CKFE…FVSE and CGGY…FMAV. N-linked (GlcNAc...) asparagine glycans are attached at residues N864 and N918.

Zn(2+) serves as cofactor.

Functionally, metalloprotease which cleaves TGF-beta family ligands daw, Actbeta and myo in vitro. Cleavage of daw enhances its signaling activity. Cleaves dorsal-ventral patterning protein sog. Processes sog more efficiently than metalloprotease tld which also cleaves sog. Required for normal dorsal development. TLD may interact physically with DPP-C protein. This Drosophila melanogaster (Fruit fly) protein is Dorsal-ventral patterning protein tolloid (tld).